The following is a 618-amino-acid chain: Isocitrate dehydrogenase kinase/phosphatase (618 aa).

ATP-binding positions include 332-338 (APGIKGM) and lysine 353. Aspartate 388 is an active-site residue.

This sequence belongs to the AceK family.

It localises to the cytoplasm. The catalysed reaction is L-seryl-[isocitrate dehydrogenase] + ATP = O-phospho-L-seryl-[isocitrate dehydrogenase] + ADP + H(+). Bifunctional enzyme which can phosphorylate or dephosphorylate isocitrate dehydrogenase (IDH) on a specific serine residue. This is a regulatory mechanism which enables bacteria to bypass the Krebs cycle via the glyoxylate shunt in response to the source of carbon. When bacteria are grown on glucose, IDH is fully active and unphosphorylated, but when grown on acetate or ethanol, the activity of IDH declines drastically concomitant with its phosphorylation. In Methylibium petroleiphilum (strain ATCC BAA-1232 / LMG 22953 / PM1), this protein is Isocitrate dehydrogenase kinase/phosphatase.